The following is a 336-amino-acid chain: Myb family transcription factor PHL8 (336 aa).

Positions 31–91 (TDAKPRLKWT…HLQKYRLGKS (61 aa)) constitute an HTH myb-type domain. The H-T-H motif DNA-binding region spans 62-87 (PKGLMKVMEIPGLTLYHLKSHLQKYR). The interval 100-134 (EVSSASENQEVESKNDSRDLRGCSVTEENSNPAKE) is disordered. The segment covering 110 to 120 (VESKNDSRDLR) has biased composition (basic and acidic residues). Positions 139–159 (TEALQMQMEVQKKLHEQIEVQ) form a coiled coil. Residues 152–157 (LHEQIE) carry the LHEQLE motif.

Belongs to the MYB-CC family.

The protein resides in the nucleus. The polypeptide is Myb family transcription factor PHL8 (Arabidopsis thaliana (Mouse-ear cress)).